Here is a 163-residue protein sequence, read N- to C-terminus: Choriogonadotropin subunit beta variant 2 (163 aa).

Residues 1–18 form the signal peptide; the sequence is MSKGLLLLLLLSMGGTWA. Intrachain disulfides connect Cys-27–Cys-75, Cys-41–Cys-90, Cys-44–Cys-128, Cys-52–Cys-106, Cys-56–Cys-108, and Cys-111–Cys-118. 2 N-linked (GlcNAc...) asparagine glycosylation sites follow: Asn-31 and Asn-48. The disordered stretch occupies residues 129–163; the sequence is DDPRFQASSSSKAPPPSLPSPSRLPGPSDTPILPQ. Residues 141-152 show a composition bias toward pro residues; that stretch reads APPPSLPSPSRL.

The protein belongs to the glycoprotein hormones subunit beta family. Expressed in placenta, testis and pituitary.

It is found in the secreted. The protein is Choriogonadotropin subunit beta variant 2 (CGB2) of Homo sapiens (Human).